A 36-amino-acid polypeptide reads, in one-letter code: Toxin Iob1 (36 aa).

Disulfide bonds link Cys-6/Cys-21, Cys-13/Cys-26, and Cys-20/Cys-33.

Its subcellular location is the secreted. Its function is as follows. Binds reversibly and blocks N-type voltage-gated calcium channels (Cav). The sequence is that of Toxin Iob1 from Isyndus obscurus (Assassin bug).